We begin with the raw amino-acid sequence, 154 residues long: Protein FasC (154 aa).

This sequence belongs to the periplasmic pilus chaperone family.

Its function is as follows. Could be required for the biogenesis of a putative fimbria. This chain is Protein FasC (fasC), found in Escherichia coli.